Here is a 273-residue protein sequence, read N- to C-terminus: Putative pyruvate, phosphate dikinase regulatory protein (273 aa).

Position 151-158 (151-158 (GVSRTSKT)) interacts with ADP.

The protein belongs to the pyruvate, phosphate/water dikinase regulatory protein family. PDRP subfamily.

It carries out the reaction N(tele)-phospho-L-histidyl/L-threonyl-[pyruvate, phosphate dikinase] + ADP = N(tele)-phospho-L-histidyl/O-phospho-L-threonyl-[pyruvate, phosphate dikinase] + AMP + H(+). It catalyses the reaction N(tele)-phospho-L-histidyl/O-phospho-L-threonyl-[pyruvate, phosphate dikinase] + phosphate + H(+) = N(tele)-phospho-L-histidyl/L-threonyl-[pyruvate, phosphate dikinase] + diphosphate. In terms of biological role, bifunctional serine/threonine kinase and phosphorylase involved in the regulation of the pyruvate, phosphate dikinase (PPDK) by catalyzing its phosphorylation/dephosphorylation. The polypeptide is Putative pyruvate, phosphate dikinase regulatory protein (Desulfitobacterium hafniense (strain Y51)).